A 142-amino-acid chain; its full sequence is Coactosin-like protein (142 aa).

An N-acetylalanine modification is found at alanine 2. Residues 2-130 (ATKIDKEACR…EEDFIRSELK (129 aa)) form the ADF-H domain. The interval 66-75 (TGDAMSKRSK) is flexible and important for F-actin binding. At lysine 102 the chain carries N6-acetyllysine. Position 141 is a phosphoserine (serine 141).

It belongs to the actin-binding proteins ADF family. Coactosin subfamily. Interacts with 5-lipoxygenase (ALOX5/5LO) in a calcium-independent manner. Binds to F-actin with a stoichiometry of 1:2.

It is found in the cytoplasm. The protein resides in the cytoskeleton. Its subcellular location is the nucleus. In terms of biological role, binds to F-actin in a calcium-independent manner. Has no direct effect on actin depolymerization. Acts as a chaperone for ALOX5 (5LO), influencing both its stability and activity in leukotrienes synthesis. The polypeptide is Coactosin-like protein (Cotl1) (Mus musculus (Mouse)).